Here is a 356-residue protein sequence, read N- to C-terminus: Sorbitol dehydrogenase (356 aa).

C44 serves as a coordination point for Zn(2+). Y50 is a binding site for substrate. H69 and E70 together coordinate Zn(2+). E155 is a substrate binding site. I183, D203, and R208 together coordinate NAD(+). Residues S210 and S224 each carry the phosphoserine modification. NAD(+) is bound by residues 272–274 (VGL) and 296–298 (VFR). Substrate is bound by residues R298 and Y299.

Belongs to the zinc-containing alcohol dehydrogenase family. Homotetramer. The cofactor is Zn(2+). In terms of tissue distribution, expressed in lens.

Its subcellular location is the mitochondrion membrane. It is found in the cell projection. The protein localises to the cilium. It localises to the flagellum. The catalysed reaction is xylitol + NAD(+) = D-xylulose + NADH + H(+). It catalyses the reaction keto-D-fructose + NADH + H(+) = D-sorbitol + NAD(+). The enzyme catalyses L-iditol + NAD(+) = keto-L-sorbose + NADH + H(+). With respect to regulation, inhibited in vitro by metal chelators such as EDTA and 1,10-phenanthroline. Polyol dehydrogenase that catalyzes the reversible NAD(+)-dependent oxidation of various sugar alcohols. Is mostly active with xylitol, D-sorbitol (D-glucitol) and L-iditol as substrates, leading to the C2-oxidized products D-xylulose, D-fructose and L-sorbose, respectively. Is a key enzyme in the polyol pathway that interconverts glucose and fructose via sorbitol, which constitutes an important alternate route for glucose metabolism. May play a role in sperm motility by using sorbitol as an alternative energy source for sperm motility. Cannot use NADP(+) as the electron acceptor. Has no activity on ethanol, methanol, glycerol, galactitol and fructose 6-phosphate. The protein is Sorbitol dehydrogenase (SORD) of Bos taurus (Bovine).